The primary structure comprises 249 residues: ATP synthase subunit a (249 aa).

The next 6 membrane-spanning stretches (helical) occupy residues 30 to 50 (SAYMLLAVAIISLLMIGGSAG), 84 to 104 (FFPLVFSLFMFIMVSNMVGII), 113 to 133 (HIIVTAALAFLVFFTVLIYGF), 143 to 163 (IFVPSGVPGFILPLVVFIEVF), 196 to 216 (LLAGLGIAGYFGAVLPLGMVV), and 221 to 241 (LELLVAFLQAYVFAILTCIYL).

It belongs to the ATPase A chain family. In terms of assembly, F-type ATPases have 2 components, CF(1) - the catalytic core - and CF(0) - the membrane proton channel. CF(1) has five subunits: alpha(3), beta(3), gamma(1), delta(1), epsilon(1). CF(0) has four main subunits: a, b, b' and c.

The protein resides in the cell inner membrane. Functionally, key component of the proton channel; it plays a direct role in the translocation of protons across the membrane. The chain is ATP synthase subunit a from Rhodopseudomonas palustris (strain BisA53).